Reading from the N-terminus, the 581-residue chain is Frizzled-3 (581 aa).

The first 19 residues, 1-19, serve as a signal peptide directing secretion; sequence MYAASILILHLTWAVATIA. Over 20–237 the chain is Extracellular; that stretch reads ANGAGHNGPV…TSSQKKTSET (218 aa). The FZ domain occupies 35 to 156; that stretch reads PNGLQCQPIA…PEKHELCMQI (122 aa). 5 cysteine pairs are disulfide-bonded: C40–C101, C48–C94, C85–C123, C112–C153, and C116–C141. The N-linked (GlcNAc...) asparagine glycan is linked to N54. N206 carries an N-linked (GlcNAc...) asparagine glycan. The chain crosses the membrane as a helical span at residues 238–258; sequence LILGLSAVCFVLTLFALVTFW. The Cytoplasmic segment spans residues 259 to 270; it reads AEPTRFGYPERP. The helical transmembrane segment at 271–291 threads the bilayer; that stretch reads VLFLCLCYNLFSVCYLERIVF. At 292-321 the chain is on the extracellular side; sequence HNQARMHDVELQGRLMRPGCLLTPPCLASY. The chain crosses the membrane as a helical span at residues 322-342; it reads ITTSYLSLCAASWWLIFALCF. Residues 343 to 359 lie on the Cytoplasmic side of the membrane; the sequence is YLSSHKKWSSEALEKRS. A helical transmembrane segment spans residues 360–380; sequence GLFHVLAWVPPLAPPIAALLL. Residues 381-393 lie on the Extracellular side of the membrane; the sequence is EKVRPSELTGMCY. The helical transmembrane segment at 394 to 414 threads the bilayer; sequence APGFVELPALVLLLLGLYFTL. The Cytoplasmic portion of the chain corresponds to 415 to 442; it reads RASRSLLSLQQQLQPTLAHHRFGQIRKR. Residues 443–463 traverse the membrane as a helical segment; sequence FVLFSLLYFAPTTAGVVAALC. Over 464-488 the chain is Extracellular; the sequence is ERYADSVPSCSTPDDCLSPTPLSAW. Residues 489-509 traverse the membrane as a helical segment; that stretch reads PALVRIFFQLVGGTLTGLWVW. Residues 510–581 lie on the Cytoplasmic side of the membrane; it reads SRKTCESYRN…PVYNPNQSRV (72 aa). The PDZ-binding motif lies at 579–581; sequence SRV.

Belongs to the G-protein coupled receptor Fz/Smo family. As to expression, wing, leg and eye imaginal disks. In embryos, expressed is seen in brain, proventriculus, Malpighian tubules, anal plate and visceral mesoderm of parasegment 8.

It localises to the membrane. In terms of biological role, receptor for Wnt proteins. Most of frizzled receptors are coupled to the beta-catenin canonical signaling pathway, which leads to the activation of disheveled proteins, inhibition of GSK-3 kinase, nuclear accumulation of beta-catenin and activation of Wnt target genes. A second signaling pathway involving PKC and calcium fluxes has been seen for some family members, but it is not yet clear if it represents a distinct pathway or if it can be integrated in the canonical pathway, as PKC seems to be required for Wnt-mediated inactivation of GSK-3 kinase. Both pathways seem to involve interactions with G-proteins. Required to coordinate the cytoskeletons of epidermal cells to produce a parallel array of cuticular hairs and bristles. This Drosophila melanogaster (Fruit fly) protein is Frizzled-3 (fz3).